The sequence spans 446 residues: Exodeoxyribonuclease 7 large subunit (446 aa).

The protein belongs to the XseA family. In terms of assembly, heterooligomer composed of large and small subunits.

The protein resides in the cytoplasm. It carries out the reaction Exonucleolytic cleavage in either 5'- to 3'- or 3'- to 5'-direction to yield nucleoside 5'-phosphates.. Functionally, bidirectionally degrades single-stranded DNA into large acid-insoluble oligonucleotides, which are then degraded further into small acid-soluble oligonucleotides. This chain is Exodeoxyribonuclease 7 large subunit, found in Streptococcus agalactiae serotype Ia (strain ATCC 27591 / A909 / CDC SS700).